The chain runs to 243 residues: 1-(5-phosphoribosyl)-5-[(5-phosphoribosylamino)methylideneamino] imidazole-4-carboxamide isomerase (243 aa).

The active-site Proton acceptor is Asp-8. Asp-130 acts as the Proton donor in catalysis.

Belongs to the HisA/HisF family.

The protein resides in the cytoplasm. It catalyses the reaction 1-(5-phospho-beta-D-ribosyl)-5-[(5-phospho-beta-D-ribosylamino)methylideneamino]imidazole-4-carboxamide = 5-[(5-phospho-1-deoxy-D-ribulos-1-ylimino)methylamino]-1-(5-phospho-beta-D-ribosyl)imidazole-4-carboxamide. The protein operates within amino-acid biosynthesis; L-histidine biosynthesis; L-histidine from 5-phospho-alpha-D-ribose 1-diphosphate: step 4/9. This Acinetobacter baumannii (strain AB307-0294) protein is 1-(5-phosphoribosyl)-5-[(5-phosphoribosylamino)methylideneamino] imidazole-4-carboxamide isomerase.